A 273-amino-acid chain; its full sequence is Nucleotide-binding protein TT_C1664 (273 aa).

Residue 8 to 15 participates in ATP binding; it reads GLSGAGKT. Residue 57 to 60 coordinates GTP; it reads DARA.

The protein belongs to the RapZ-like family.

Functionally, displays ATPase and GTPase activities. This Thermus thermophilus (strain ATCC BAA-163 / DSM 7039 / HB27) protein is Nucleotide-binding protein TT_C1664.